The chain runs to 154 residues: Aspartate carbamoyltransferase regulatory chain (154 aa).

Residues cysteine 109, cysteine 114, cysteine 138, and cysteine 141 each coordinate Zn(2+).

The protein belongs to the PyrI family. In terms of assembly, contains catalytic and regulatory chains. The cofactor is Zn(2+).

Functionally, involved in allosteric regulation of aspartate carbamoyltransferase. The sequence is that of Aspartate carbamoyltransferase regulatory chain from Yersinia enterocolitica serotype O:8 / biotype 1B (strain NCTC 13174 / 8081).